The primary structure comprises 168 residues: Desumoylating isopeptidase 1 (168 aa).

Residues 7 to 149 form the PPPDE domain; sequence YPVKLYVYDL…FGQALRPFLD (143 aa). Residue histidine 38 is part of the active site. The Nuclear export signal 1 motif lies at 83 to 91; sequence IFLEYLSSL. Cysteine 108 is a catalytic residue. The short motif at 139 to 153 is the Nuclear export signal 2 element; that stretch reads PFGQALRPFLDSIQI.

The protein belongs to the DeSI family. In terms of assembly, homodimer. Interacts with UBQLN4; leading to the export of UBQLN4 from the nucleus.

Its subcellular location is the cytoplasm. The protein resides in the nucleus. It carries out the reaction S-hexadecanoyl-L-cysteinyl-[protein] + H2O = L-cysteinyl-[protein] + hexadecanoate + H(+). Functionally, protease which deconjugates SUMO1, SUMO2 and SUMO3 from some substrate proteins. Has isopeptidase but not SUMO-processing activity. Desumoylates ZBTB46. Collaborates with UBQLN4 in the export of ubiquitinated proteins from the nucleus to the cytoplasm. Exhibits palmitoyl protein thioesterase (S-depalmitoylation) activity towards synthetic substrates 4-methylumbelliferyl-6-S-palmitoyl-beta-D-glucopyranoside and S-depalmitoylation probe 5 (DPP-5). The polypeptide is Desumoylating isopeptidase 1 (Desi1) (Rattus norvegicus (Rat)).